Consider the following 92-residue polypeptide: Small ribosomal subunit protein uS19 (92 aa).

It belongs to the universal ribosomal protein uS19 family.

Its function is as follows. Protein S19 forms a complex with S13 that binds strongly to the 16S ribosomal RNA. This is Small ribosomal subunit protein uS19 from Paracidovorax citrulli (strain AAC00-1) (Acidovorax citrulli).